The primary structure comprises 556 residues: Urocanate hydratase (556 aa).

Residues 53-54 (GG), glutamine 131, 177-179 (GMG), glutamate 197, 243-244 (NA), 264-268 (QTSAH), 274-275 (YL), and tyrosine 323 contribute to the NAD(+) site. Cysteine 411 is a catalytic residue. Position 493 (glycine 493) interacts with NAD(+).

Belongs to the urocanase family. It depends on NAD(+) as a cofactor.

Its subcellular location is the cytoplasm. It carries out the reaction 4-imidazolone-5-propanoate = trans-urocanate + H2O. It participates in amino-acid degradation; L-histidine degradation into L-glutamate; N-formimidoyl-L-glutamate from L-histidine: step 2/3. In terms of biological role, catalyzes the conversion of urocanate to 4-imidazolone-5-propionate. This is Urocanate hydratase from Pseudomonas fluorescens (strain SBW25).